The following is an 81-amino-acid chain: Acyl carrier protein (81 aa).

The 76-residue stretch at 3-78 (QEIFEKVKSI…AAVDYIEKEQ (76 aa)) folds into the Carrier domain. The residue at position 38 (Ser-38) is an O-(pantetheine 4'-phosphoryl)serine.

Belongs to the acyl carrier protein (ACP) family. Post-translationally, 4'-phosphopantetheine is transferred from CoA to a specific serine of apo-ACP by AcpS. This modification is essential for activity because fatty acids are bound in thioester linkage to the sulfhydryl of the prosthetic group.

The protein resides in the cytoplasm. It functions in the pathway lipid metabolism; fatty acid biosynthesis. Carrier of the growing fatty acid chain in fatty acid biosynthesis. The chain is Acyl carrier protein from Crocosphaera subtropica (strain ATCC 51142 / BH68) (Cyanothece sp. (strain ATCC 51142)).